The sequence spans 175 residues: 6,7-dimethyl-8-ribityllumazine synthase (175 aa).

5-amino-6-(D-ribitylamino)uracil-binding positions include Phe-24, 58 to 60 (ALE), and 82 to 84 (AVI). 87–88 (ET) provides a ligand contact to (2S)-2-hydroxy-3-oxobutyl phosphate. His-90 functions as the Proton donor in the catalytic mechanism. Residue Asn-115 participates in 5-amino-6-(D-ribitylamino)uracil binding. Arg-129 contacts (2S)-2-hydroxy-3-oxobutyl phosphate. Residues 151–175 (LEPEEDDEDEDEEDEDFDDEETDRR) are disordered. Over residues 152–175 (EPEEDDEDEDEEDEDFDDEETDRR) the composition is skewed to acidic residues.

The protein belongs to the DMRL synthase family.

It carries out the reaction (2S)-2-hydroxy-3-oxobutyl phosphate + 5-amino-6-(D-ribitylamino)uracil = 6,7-dimethyl-8-(1-D-ribityl)lumazine + phosphate + 2 H2O + H(+). The protein operates within cofactor biosynthesis; riboflavin biosynthesis; riboflavin from 2-hydroxy-3-oxobutyl phosphate and 5-amino-6-(D-ribitylamino)uracil: step 1/2. In terms of biological role, catalyzes the formation of 6,7-dimethyl-8-ribityllumazine by condensation of 5-amino-6-(D-ribitylamino)uracil with 3,4-dihydroxy-2-butanone 4-phosphate. This is the penultimate step in the biosynthesis of riboflavin. The polypeptide is 6,7-dimethyl-8-ribityllumazine synthase (Bordetella petrii (strain ATCC BAA-461 / DSM 12804 / CCUG 43448)).